The following is an 831-amino-acid chain: Periplasmic nitrate reductase (831 aa).

The segment at residues methionine 1–alanine 38 is a signal peptide (tat-type signal). The 4Fe-4S Mo/W bis-MGD-type domain occupies leucine 41–aspartate 97. The [4Fe-4S] cluster site is built by cysteine 48, cysteine 51, cysteine 55, and cysteine 83. Residues lysine 85, glutamine 152, asparagine 177, cysteine 181, tryptophan 214–methionine 221, serine 245–histidine 249, glutamine 264–aspartate 266, methionine 375, glutamine 379, asparagine 485, serine 511–aspartate 512, lysine 534, aspartate 561, and threonine 721–serine 730 contribute to the Mo-bis(molybdopterin guanine dinucleotide) site. Residue tryptophan 797 participates in substrate binding. Positions 805 and 822 each coordinate Mo-bis(molybdopterin guanine dinucleotide).

Belongs to the prokaryotic molybdopterin-containing oxidoreductase family. NasA/NapA/NarB subfamily. In terms of assembly, component of the periplasmic nitrate reductase NapAB complex composed of NapA and NapB. It depends on [4Fe-4S] cluster as a cofactor. Mo-bis(molybdopterin guanine dinucleotide) serves as cofactor. Post-translationally, predicted to be exported by the Tat system. The position of the signal peptide cleavage has not been experimentally proven.

The protein resides in the periplasm. It catalyses the reaction 2 Fe(II)-[cytochrome] + nitrate + 2 H(+) = 2 Fe(III)-[cytochrome] + nitrite + H2O. Functionally, catalytic subunit of the periplasmic nitrate reductase complex NapAB. Receives electrons from NapB and catalyzes the reduction of nitrate to nitrite. In Bordetella parapertussis (strain 12822 / ATCC BAA-587 / NCTC 13253), this protein is Periplasmic nitrate reductase.